Here is a 335-residue protein sequence, read N- to C-terminus: Syntaxin-18 (335 aa).

Residues Met-1 to Asn-309 are Cytoplasmic-facing. 2 stretches are compositionally biased toward basic and acidic residues: residues Lys-168–Ser-182 and Lys-192–Leu-208. Residues Lys-168 to Glu-226 form a disordered region. The t-SNARE coiled-coil homology domain occupies Ile-243–Ala-305. Residues Ala-310–Leu-330 traverse the membrane as a helical; Anchor for type IV membrane protein segment. At Asp-331–Ser-335 the chain is on the vesicular side.

The protein belongs to the syntaxin family. In terms of assembly, component of a SNARE complex consisting of STX18, USE1L, BNIP1/SEC20L, and SEC22B. RINT1/TIP20L and ZW10 are associated with the complex through interaction with BNIP1/SEC20L. Interacts directly with USE1L and BNIP1/SEC20L. Ubiquitous.

The protein localises to the endoplasmic reticulum membrane. It is found in the golgi apparatus membrane. Syntaxin that may be involved in targeting and fusion of Golgi-derived retrograde transport vesicles with the ER. This is Syntaxin-18 (STX18) from Homo sapiens (Human).